A 235-amino-acid polypeptide reads, in one-letter code: NAD(P)H-hydrate epimerase (235 aa).

The region spanning 18 to 221 (AAQIDEQLFT…SLVDEHELLM (204 aa)) is the YjeF N-terminal domain. 65 to 69 (NNGGD) lines the (6S)-NADPHX pocket. 2 residues coordinate K(+): asparagine 66 and aspartate 127. Residues 131-137 (GFSFHPP) and aspartate 160 each bind (6S)-NADPHX. Serine 163 is a binding site for K(+).

The protein belongs to the NnrE/AIBP family. K(+) is required as a cofactor.

The catalysed reaction is (6R)-NADHX = (6S)-NADHX. It catalyses the reaction (6R)-NADPHX = (6S)-NADPHX. Its function is as follows. Catalyzes the epimerization of the S- and R-forms of NAD(P)HX, a damaged form of NAD(P)H that is a result of enzymatic or heat-dependent hydration. This is a prerequisite for the S-specific NAD(P)H-hydrate dehydratase to allow the repair of both epimers of NAD(P)HX. The protein is NAD(P)H-hydrate epimerase of Caenorhabditis elegans.